The sequence spans 1302 residues: Zinc finger protein 536 (1302 aa).

The tract at residues 1-26 (MEEASLCLGVSSTAPEAEPHLSGPVL) is disordered. 7 C2H2-type zinc fingers span residues 130–152 (YPCPLCGKRFRFNSILSLHMRTH), 158–180 (FKCPYCDHRAAQKGNLKIHLRTH), 274–297 (FRCTFCKGKFKKREELDRHIRILH), 300–323 (YKCTLCDFAASQEEELISHVEKAH), 345–367 (FRCEVCGQVFSQAWFLKGHMRKH), 373–395 (HCCQICGRRFKEPWFLKNHMKVH), and 631–653 (TECPDCGRVFRTYHQVVVHSRVH). Residues 650–736 (SRVHKRDRKS…IGEEAGRAGG (87 aa)) form a disordered region. Residues 657–676 (RKSDEDALHVGVGLEERRGS) are compositionally biased toward basic and acidic residues. Residues 677-698 (GSDQESQSVSRSTTPGSSNVTE) are compositionally biased toward polar residues. 2 C2H2-type zinc fingers span residues 753–775 (KDCPYCGKTFRTSHHLKVHLRIH) and 781–803 (YKCPHCDYAGTQSASLKYHLERH). 4 disordered regions span residues 804-832 (HRERQNGAGPLSGQPPNQEHKDETSSKAP), 855-897 (GPAS…SKSS), 935-988 (KDTK…APTL), and 1133-1261 (NKNT…GLEK). Phosphoserine is present on residues S828 and S829. A compositionally biased stretch (polar residues) spans 869–883 (GDHSGQATGMPSELS). A compositionally biased stretch (basic and acidic residues) spans 935–973 (KDTKDKVPSDAHPMKAHTAEGGEEKASMKPSQRKSEKSQ). 2 stretches are compositionally biased toward acidic residues: residues 1161-1171 (DLSDIASSEDM) and 1179-1188 (NEDEELDTEP). A compositionally biased stretch (low complexity) spans 1198-1212 (LSKDGSSEGGDSLLS).

It belongs to the krueppel C2H2-type zinc-finger protein family. Expressed predominantly in the brain, while a weak signal is also detected in the heart and testis. Expression is abundant in neuronal cells of the cerebral cortex, hippocampus and hypothalamic area (at protein level).

The protein resides in the nucleus. Transcriptional repressor that negatively regulates neuron differentiation by repressing retinoic acid-induced gene transcription. Binds and interrupts RARA from binding to retinoic acid response elements (RARE) composed of tandem 5'-AGGTCA-3' sites known as DR1-DR5. Recognizes and binds 2 copies of the core DNA sequence 5'-CCCCCA-3'. The protein is Zinc finger protein 536 (Znf536) of Mus musculus (Mouse).